Consider the following 178-residue polypeptide: Relaxin-like protein SQ10 (178 aa).

The first 20 residues, 1-20, serve as a signal peptide directing secretion; it reads MPALLFYLLGFCLLQGQVTG. 3 cysteine pairs are disulfide-bonded: Cys-34/Cys-165, Cys-46/Cys-178, and Cys-164/Cys-169. The propeptide at 54 to 150 is connecting peptide; sequence ESPSPENPFL…SSASESNTFS (97 aa).

This sequence belongs to the insulin family. In terms of assembly, heterodimer of a B chain and an A chain linked by two disulfide bonds.

Its subcellular location is the secreted. The sequence is that of Relaxin-like protein SQ10 from Oryctolagus cuniculus (Rabbit).